Reading from the N-terminus, the 2451-residue chain is Reducing polyketide synthase 8 (2451 aa).

The Ketosynthase family 3 (KS3) domain occupies 12–434; the sequence is NEPIAIVGSS…GTNAHAILEA (423 aa). Catalysis depends on for beta-ketoacyl synthase activity residues cysteine 174, histidine 313, and histidine 354. The Malonyl-CoA:ACP transacylase (MAT) domain occupies 538 to 846; sequence VFTGQGAQWA…GPATETINNM (309 aa). Positions 940-1085 are N-terminal hotdog fold; the sequence is HQLLGSASTF…GFLRIELGAP (146 aa). One can recognise a PKS/mFAS DH domain in the interval 940 to 1254; that stretch reads HQLLGSASTF…LLNLPGSLRS (315 aa). Histidine 974 serves as the catalytic Proton acceptor; for dehydratase activity. The interval 1100–1254 is C-terminal hotdog fold; it reads LIPLDVEELY…LLNLPGSLRS (155 aa). Aspartate 1160 functions as the Proton donor; for dehydratase activity in the catalytic mechanism. The methyltransfrase (MT) domain stretch occupies residues 1294-1590; the sequence is LVLFYCQKVL…QHFCSVMLSQ (297 aa). The Ketoreductase (KR) domain occupies 2088-2266; sequence TYLLLGLAGD…PGCVVHIGGV (179 aa). In terms of domain architecture, Carrier spans 2366-2451; sequence DACLDLLLGG…LAIWRKQVKA (86 aa). O-(pantetheine 4'-phosphoryl)serine is present on serine 2404.

Requires pantetheine 4'-phosphate as cofactor.

It functions in the pathway secondary metabolite biosynthesis. Reducing polyketide synthase; part of the gene cluster that mediates the biosynthesis of fusamarins, isocoumarin derivatives that show moderate cytotoxicity with IC(50) values between 1 and 50 uM. The polyketide synthase FMN1 probably synthesizes two different polyketides, a tetra- and a pentaketide, containinga varying number of double bonds depending on the selective actions of the trans-enoyl reductase FMN2. Chain fusion will presumably be mediated by the KS domain before finally offloading is catalyzed by the alpha/beta hydrolase fold enzyme FMN3. The chain is Reducing polyketide synthase 8 from Fusarium mangiferae (Mango malformation disease fungus).